The sequence spans 468 residues: 6-phosphogluconate dehydrogenase, decarboxylating (468 aa).

NADP(+) is bound by residues 9–14, 32–34, 73–75, and Asn-101; these read GLAVMG, NRS, and VQA. Substrate-binding positions include Asn-101 and 127 to 129; that span reads SGG. Lys-182 acts as the Proton acceptor in catalysis. Substrate is bound at residue 185 to 186; the sequence is HN. Glu-189 acts as the Proton donor in catalysis. Substrate contacts are provided by Tyr-190, Lys-259, Arg-286, Arg-444, and His-450.

This sequence belongs to the 6-phosphogluconate dehydrogenase family. In terms of assembly, homodimer.

The catalysed reaction is 6-phospho-D-gluconate + NADP(+) = D-ribulose 5-phosphate + CO2 + NADPH. Its pathway is carbohydrate degradation; pentose phosphate pathway; D-ribulose 5-phosphate from D-glucose 6-phosphate (oxidative stage): step 3/3. In terms of biological role, catalyzes the oxidative decarboxylation of 6-phosphogluconate to ribulose 5-phosphate and CO(2), with concomitant reduction of NADP to NADPH. The polypeptide is 6-phosphogluconate dehydrogenase, decarboxylating (gnd) (Staphylococcus aureus (strain COL)).